Here is a 223-residue protein sequence, read N- to C-terminus: NLP effector protein 2 (223 aa).

The short motif at 90–100 (AIMYSWYFPKD) is the Conserved undecapeptide motif element. The Conserved p motif motif lies at 107–113 (GHRHDWE).

It belongs to the Necrosis inducing protein (NPP1) family.

The protein localises to the secreted. It is found in the host cytoplasm. In terms of biological role, probable secreted effector that may act as a pathogen-associated molecular pattern (PAMP) recognized by the plant immune system. Seems not to induce necrosis, neither in several susceptible or resistant Vitis species nor in the dicot model plant Nicotiana benthamiana. In Plasmopara viticola (Downy mildew of grapevine), this protein is NLP effector protein 2.